We begin with the raw amino-acid sequence, 537 residues long: Leucine-rich repeat LGI family member 4 (537 aa).

Positions 1-19 (MGGAGILLLLLAGAGVVVA) are cleaved as a signal peptide. LRR repeat units lie at residues 53–74 (TLLS…SFLR), 77–98 (SLHL…AFAG), 101–122 (HLQY…ALRG), and 125–146 (SLTH…LFRG). The 51-residue stretch at 158–208 (NPFQCDCRVLWLLQWMPTVNASVGTGACAGPASLSHMQLHHLDPKTFKCRA) folds into the LRRCT domain. N177 carries an N-linked (GlcNAc...) asparagine glycan. EAR repeat units follow at residues 210-252 (ELSW…SWDY), 256-298 (RFRP…ARPS), 302-349 (RLAP…CRDG), 351-394 (GFYP…HWTG), 396-439 (RFER…RWDG), 441-483 (MFRL…RLEP), and 487-532 (LLEP…QHHE).

In terms of assembly, can bind to ADAM11, ADAM22 and ADAM23. As to expression, widely expressed, with highest expression in brain.

Its subcellular location is the secreted. Functionally, component of Schwann cell signaling pathway(s) that controls axon segregation and myelin formation. This chain is Leucine-rich repeat LGI family member 4 (LGI4), found in Homo sapiens (Human).